The primary structure comprises 557 residues: Dihydroxy-acid dehydratase (557 aa).

C47 contacts [2Fe-2S] cluster. Residue D79 coordinates Mg(2+). C120 provides a ligand contact to [2Fe-2S] cluster. Residues D121 and K122 each coordinate Mg(2+). N6-carboxylysine is present on K122. C192 contributes to the [2Fe-2S] cluster binding site. Residue E444 coordinates Mg(2+). S470 (proton acceptor) is an active-site residue.

Belongs to the IlvD/Edd family. Homodimer. [2Fe-2S] cluster serves as cofactor. Mg(2+) is required as a cofactor.

It catalyses the reaction (2R)-2,3-dihydroxy-3-methylbutanoate = 3-methyl-2-oxobutanoate + H2O. The enzyme catalyses (2R,3R)-2,3-dihydroxy-3-methylpentanoate = (S)-3-methyl-2-oxopentanoate + H2O. It functions in the pathway amino-acid biosynthesis; L-isoleucine biosynthesis; L-isoleucine from 2-oxobutanoate: step 3/4. The protein operates within amino-acid biosynthesis; L-valine biosynthesis; L-valine from pyruvate: step 3/4. Functionally, functions in the biosynthesis of branched-chain amino acids. Catalyzes the dehydration of (2R,3R)-2,3-dihydroxy-3-methylpentanoate (2,3-dihydroxy-3-methylvalerate) into 2-oxo-3-methylpentanoate (2-oxo-3-methylvalerate) and of (2R)-2,3-dihydroxy-3-methylbutanoate (2,3-dihydroxyisovalerate) into 2-oxo-3-methylbutanoate (2-oxoisovalerate), the penultimate precursor to L-isoleucine and L-valine, respectively. The chain is Dihydroxy-acid dehydratase from Synechococcus sp. (strain CC9605).